A 565-amino-acid polypeptide reads, in one-letter code: Transmembrane 7 superfamily member 3 (565 aa).

An N-terminal signal peptide occupies residues 1-21; that stretch reads MWRLRLLVLAVLAAGSAEAQA. N-linked (GlcNAc...) asparagine glycosylation is found at Asn22, Asn56, Asn70, and Asn259. The next 7 membrane-spanning stretches (helical) occupy residues 287 to 307, 315 to 335, 341 to 361, 364 to 384, 402 to 422, 427 to 447, and 478 to 498; these read VSTK…CFFG, LFFV…TRLT, VRLA…VASW, FGIL…LVSS, VFWV…MGCL, ILAC…SYMF, and NDYI…TLQI.

It localises to the cell membrane. Its function is as follows. Involved in the inhibition of cytokine-induced death of pancreatic beta cells. Involved in the promotion of insulin secretion from pancreatic beta cells. Is a downstream transcriptional target of p53/TP53, and acts as a pro-survival homeostatic factor that attenuates the development of cellular stress. Maintains protein homeostasis and promotes cell survival through attenuation of endoplasmic reticulum (ER) stress and the subsequent induction of unfolded protein response (UPR). The sequence is that of Transmembrane 7 superfamily member 3 (Tm7sf3) from Mus musculus (Mouse).